A 466-amino-acid polypeptide reads, in one-letter code: UDP-N-acetylmuramoylalanine--D-glutamate ligase (466 aa).

127–133 is a binding site for ATP; it reads GSNGKST.

It belongs to the MurCDEF family.

It localises to the cytoplasm. The catalysed reaction is UDP-N-acetyl-alpha-D-muramoyl-L-alanine + D-glutamate + ATP = UDP-N-acetyl-alpha-D-muramoyl-L-alanyl-D-glutamate + ADP + phosphate + H(+). Its pathway is cell wall biogenesis; peptidoglycan biosynthesis. In terms of biological role, cell wall formation. Catalyzes the addition of glutamate to the nucleotide precursor UDP-N-acetylmuramoyl-L-alanine (UMA). This is UDP-N-acetylmuramoylalanine--D-glutamate ligase from Ruegeria pomeroyi (strain ATCC 700808 / DSM 15171 / DSS-3) (Silicibacter pomeroyi).